Reading from the N-terminus, the 375-residue chain is Alcohol dehydrogenase class-3 chain L (375 aa).

At Ala-1 the chain carries N-acetylalanine. Zn(2+) contacts are provided by Cys-46, His-68, Cys-98, Cys-101, Cys-104, Cys-112, and Cys-175.

This sequence belongs to the zinc-containing alcohol dehydrogenase family. Class-III subfamily. As to quaternary structure, homodimer or heterodimer with H chain. Zn(2+) is required as a cofactor.

It localises to the cytoplasm. The enzyme catalyses a primary alcohol + NAD(+) = an aldehyde + NADH + H(+). It catalyses the reaction a secondary alcohol + NAD(+) = a ketone + NADH + H(+). The catalysed reaction is S-(hydroxymethyl)glutathione + NADP(+) = S-formylglutathione + NADPH + H(+). It carries out the reaction S-(hydroxymethyl)glutathione + NAD(+) = S-formylglutathione + NADH + H(+). In terms of biological role, class-III ADH is remarkably ineffective in oxidizing ethanol, but it readily catalyzes the oxidation of long-chain primary alcohols and the oxidation of S-(hydroxymethyl) glutathione. In Gadus morhua (Atlantic cod), this protein is Alcohol dehydrogenase class-3 chain L.